The primary structure comprises 150 residues: 3-hydroxyacyl-[acyl-carrier-protein] dehydratase FabZ (150 aa).

His54 is an active-site residue.

Belongs to the thioester dehydratase family. FabZ subfamily.

It is found in the cytoplasm. It carries out the reaction a (3R)-hydroxyacyl-[ACP] = a (2E)-enoyl-[ACP] + H2O. Functionally, involved in unsaturated fatty acids biosynthesis. Catalyzes the dehydration of short chain beta-hydroxyacyl-ACPs and long chain saturated and unsaturated beta-hydroxyacyl-ACPs. The polypeptide is 3-hydroxyacyl-[acyl-carrier-protein] dehydratase FabZ (Vibrio campbellii (strain ATCC BAA-1116)).